The primary structure comprises 188 residues: Adenine phosphoribosyltransferase (188 aa).

Belongs to the purine/pyrimidine phosphoribosyltransferase family. As to quaternary structure, homodimer.

It localises to the cytoplasm. It catalyses the reaction AMP + diphosphate = 5-phospho-alpha-D-ribose 1-diphosphate + adenine. It participates in purine metabolism; AMP biosynthesis via salvage pathway; AMP from adenine: step 1/1. Catalyzes a salvage reaction resulting in the formation of AMP, that is energically less costly than de novo synthesis. This is Adenine phosphoribosyltransferase from Burkholderia cenocepacia (strain HI2424).